We begin with the raw amino-acid sequence, 623 residues long: Immunity-related GTPase family Q protein (623 aa).

Cysteine 152 and cysteine 158 form a disulfide bridge. Positions 155-180 (SDGCEELERLRAALQSQAEALRRLLP) form a coiled coil. Residues 186 to 189 (FEVL) carry the LIR 1 motif. At threonine 203 the chain carries Phosphothreonine. Positions 223–449 (ARLDLAVAGK…PGLCEWLRRA (227 aa)) constitute an IRG-type G domain. The disordered stretch occupies residues 334-393 (EGEDPECLGEGKMENPKGESLKNAGGGGLENALSKGREKCSAGSQKAGSGEGPGKAGSEG). Residues 342-353 (GEGKMENPKGES) are compositionally biased toward basic and acidic residues. Positions 421–424 (WEVL) match the LIR 2 motif.

Belongs to the TRAFAC class dynamin-like GTPase superfamily. IRG family. In terms of assembly, interacts (via LIR motif 1) with GABARAPL2. Interacts (via LIR motif 2) with MAP1LC3B/LC3B.

It localises to the lysosome. The protein resides in the cytoplasmic vesicle. It is found in the autophagosome. Autophagy receptor that specifically promotes clearance of misfolded MHC class I molecules by targeting them to the lysosome for degradation. Acts as a molecular adapter that specifically recognizes and binds (1) misfolded MHC class I molecules following their ubiquitination, as well as (2) autophagy-related proteins, promoting the recruitment of misfolded MHC class I molecules to autophagy machinery for degradation. Degradation of misfolded MHC class I molecules is essential to prevent accumulation of defective MHC class I complexes at the surface of CD8(+) T-cells and prevent a stronger T-cell-mediated response. In contrast to other members of the family, does not show GTPase activity. In Homo sapiens (Human), this protein is Immunity-related GTPase family Q protein.